The primary structure comprises 535 residues: CTP synthase (535 aa).

The interval M1–L268 is amidoligase domain. S14 is a CTP binding site. S14 is a binding site for UTP. S15–T20 contributes to the ATP binding site. Residue Y55 participates in L-glutamine binding. D72 contributes to the ATP binding site. Residues D72 and E142 each contribute to the Mg(2+) site. CTP-binding positions include D149 to E151, K189 to Q194, and K225. UTP is bound by residues K189–Q194 and K225. V243 contributes to the ATP binding site. The 234-residue stretch at Y302–L535 folds into the Glutamine amidotransferase type-1 domain. G359 lines the L-glutamine pocket. The Nucleophile; for glutamine hydrolysis role is filled by C386. L-glutamine contacts are provided by residues F387–Q390, E410, and R467. Active-site residues include H511 and E513.

The protein belongs to the CTP synthase family. As to quaternary structure, homotetramer in the presence of ATP and UTP. The enzyme dissociates into homodimers in the absence of substrate nucleotides.

The catalysed reaction is UTP + L-glutamine + ATP + H2O = CTP + L-glutamate + ADP + phosphate + 2 H(+). It catalyses the reaction L-glutamine + H2O = L-glutamate + NH4(+). It carries out the reaction UTP + NH4(+) + ATP = CTP + ADP + phosphate + 2 H(+). The protein operates within pyrimidine metabolism; CTP biosynthesis via de novo pathway; CTP from UDP: step 2/2. With respect to regulation, allosterically activated by GTP, when glutamine is the substrate; GTP has no effect on the reaction when ammonia is the substrate. The allosteric effector GTP functions by stabilizing the protein conformation that binds the tetrahedral intermediate(s) formed during glutamine hydrolysis. Inhibited by the product CTP, via allosteric rather than competitive inhibition. Catalyzes the ATP-dependent amination of UTP to CTP with either L-glutamine or ammonia as the source of nitrogen. Regulates intracellular CTP levels through interactions with the four ribonucleotide triphosphates. This Saccharolobus solfataricus (strain ATCC 35092 / DSM 1617 / JCM 11322 / P2) (Sulfolobus solfataricus) protein is CTP synthase.